The following is a 299-amino-acid chain: Cycloserine biosynthesis protein DcsG (299 aa).

ATP is bound by residues Lys92, Lys137, Ser144, Gln175, Pro176, and Val178. Residues 95 to 298 (LADLAAHGVP…FAQALAERLK (204 aa)) form the ATP-grasp domain. Active-site residues include Arg220 and Arg254. Mg(2+) contacts are provided by Glu269 and Glu271. Glu271 is an active-site residue.

Monomer. Mg(2+) serves as cofactor.

The enzyme catalyses O-ureido-D-serine + ATP + H2O + H(+) = D-cycloserine + NH4(+) + ADP + phosphate + CO2. Involved in the biosynthesis of the antibiotic D-cycloserine (DCS), a cyclic structural analog of D-alanine, used as an antitubercular agent. Catalyzes the synthesis of D-cycloserine from O-ureido-D-serine (D-OUS). It reacts with D-OUS, D-homocysteine and beta-aminooxy-D-alanine. This Streptomyces lavendulae protein is Cycloserine biosynthesis protein DcsG.